A 328-amino-acid polypeptide reads, in one-letter code: Malate dehydrogenase (328 aa).

NAD(+) is bound at residue 12-18 (GAAGQIG). Substrate contacts are provided by Arg95 and Arg101. NAD(+) contacts are provided by residues Asn108, Gln115, and 132–134 (VGN). Substrate contacts are provided by Asn134 and Arg165. His190 functions as the Proton acceptor in the catalytic mechanism.

This sequence belongs to the LDH/MDH superfamily. MDH type 2 family.

The enzyme catalyses (S)-malate + NAD(+) = oxaloacetate + NADH + H(+). In terms of biological role, catalyzes the reversible oxidation of malate to oxaloacetate. The sequence is that of Malate dehydrogenase from Delftia acidovorans (strain DSM 14801 / SPH-1).